We begin with the raw amino-acid sequence, 77 residues long: Acyl carrier protein (77 aa).

The Carrier domain maps to 2–77; sequence ADVMERVTKI…DVVDYINNNQ (76 aa). S37 is modified (O-(pantetheine 4'-phosphoryl)serine).

It belongs to the acyl carrier protein (ACP) family. Post-translationally, 4'-phosphopantetheine is transferred from CoA to a specific serine of apo-ACP by AcpS. This modification is essential for activity because fatty acids are bound in thioester linkage to the sulfhydryl of the prosthetic group.

Its subcellular location is the cytoplasm. Its pathway is lipid metabolism; fatty acid biosynthesis. In terms of biological role, carrier of the growing fatty acid chain in fatty acid biosynthesis. The chain is Acyl carrier protein from Shouchella clausii (strain KSM-K16) (Alkalihalobacillus clausii).